Reading from the N-terminus, the 344-residue chain is Ferredoxin--NADP reductase (344 aa).

FAD contacts are provided by Ser-12, Asp-31, Lys-39, Tyr-43, Val-83, Ile-118, Asp-285, and Ser-326.

Belongs to the ferredoxin--NADP reductase type 2 family. In terms of assembly, homodimer. FAD is required as a cofactor.

The catalysed reaction is 2 reduced [2Fe-2S]-[ferredoxin] + NADP(+) + H(+) = 2 oxidized [2Fe-2S]-[ferredoxin] + NADPH. This is Ferredoxin--NADP reductase from Staphylococcus aureus (strain JH1).